Reading from the N-terminus, the 319-residue chain is Urease accessory protein UreD (319 aa).

The disordered stretch occupies residues P254–E273. A compositionally biased stretch (basic and acidic residues) spans A262–E273.

This sequence belongs to the UreD family. UreD, UreF and UreG form a complex that acts as a GTP-hydrolysis-dependent molecular chaperone, activating the urease apoprotein by helping to assemble the nickel containing metallocenter of UreC. The UreE protein probably delivers the nickel.

It is found in the cytoplasm. Functionally, required for maturation of urease via the functional incorporation of the urease nickel metallocenter. In Frankia casuarinae (strain DSM 45818 / CECT 9043 / HFP020203 / CcI3), this protein is Urease accessory protein UreD.